We begin with the raw amino-acid sequence, 516 residues long: Gastrula zinc finger protein XlCGF53.1 (516 aa).

Disordered regions lie at residues 1–33 and 200–220; these read MGMW…GKKE and GNQS…TDKP. Residues 200-218 are compositionally biased toward polar residues; it reads GNQSDCSINPLTEQIQGTD. C2H2-type zinc fingers lie at residues 312-334, 354-376, 382-404, 410-432, 438-460, 466-488, and 494-516; these read YICS…QKTH, FPCS…QSSH, YACS…LKLH, FPCS…RRVH, YSCS…QRTH, and FSCT…HRTH.

It belongs to the krueppel C2H2-type zinc-finger protein family.

The protein resides in the nucleus. Its function is as follows. May be involved in transcriptional regulation. The polypeptide is Gastrula zinc finger protein XlCGF53.1 (Xenopus laevis (African clawed frog)).